The chain runs to 273 residues: Ribonuclease Z (273 aa).

5 residues coordinate Zn(2+): histidine 61, histidine 63, histidine 146, aspartate 169, and histidine 233.

The protein belongs to the RNase Z family. In terms of assembly, homodimer. It depends on Zn(2+) as a cofactor.

It catalyses the reaction Endonucleolytic cleavage of RNA, removing extra 3' nucleotides from tRNA precursor, generating 3' termini of tRNAs. A 3'-hydroxy group is left at the tRNA terminus and a 5'-phosphoryl group is left at the trailer molecule.. Zinc phosphodiesterase, which displays some tRNA 3'-processing endonuclease activity. Probably involved in tRNA maturation, by removing a 3'-trailer from precursor tRNA. This Mycobacterium tuberculosis (strain ATCC 25177 / H37Ra) protein is Ribonuclease Z.